The following is a 110-amino-acid chain: Small ribosomal subunit protein eS25 (110 aa).

The disordered stretch occupies residues 1–38 (MGGKKKPTLSQLAKKAEKEKAQQAQKAKKEVKKEETPA). Over residues 14–38 (KKAEKEKAQQAQKAKKEVKKEETPA) the composition is skewed to basic and acidic residues.

Belongs to the eukaryotic ribosomal protein eS25 family.

In Pyrobaculum aerophilum (strain ATCC 51768 / DSM 7523 / JCM 9630 / CIP 104966 / NBRC 100827 / IM2), this protein is Small ribosomal subunit protein eS25 (rps25e).